A 291-amino-acid polypeptide reads, in one-letter code: Transmembrane protein 41B (291 aa).

The disordered stretch occupies residues 1–39; sequence MAKGRVAERSQLGAHHTTPVGDGAAGTRGLAAPGSRDHQ. Thr18 carries the phosphothreonine modification. A Phosphoserine modification is found at Ser35. Transmembrane regions (helical) follow at residues 52 to 72, 109 to 129, 147 to 169, 197 to 217, 225 to 245, and 262 to 282; these read MSLL…FLVY, FYVQ…TFAI, LALF…LSYL, LINY…FINI, PLKV…FVAI, and SWNS…PAIF. A VTT domain; required for its function in autophagy region spans residues 140–251; that stretch reads GFLYPFPLAL…FVAIKAGTTL (112 aa).

It belongs to the TMEM41 family. In terms of assembly, interacts with VMP1. Interacts with COPA, COPB1, VDAC1 and ERLIN2. Interacts with ATG2A. Interacts with SURF4. (Microbial infection) Interacts with Zika virus NS4A protein and Yellow fever virus NS4B protein.

The protein resides in the endoplasmic reticulum membrane. It is found in the endomembrane system. It localises to the cytoplasm. The catalysed reaction is a 1,2-diacyl-sn-glycero-3-phospho-L-serine(in) = a 1,2-diacyl-sn-glycero-3-phospho-L-serine(out). It carries out the reaction cholesterol(in) = cholesterol(out). The enzyme catalyses a 1,2-diacyl-sn-glycero-3-phosphocholine(in) = a 1,2-diacyl-sn-glycero-3-phosphocholine(out). It catalyses the reaction a 1,2-diacyl-sn-glycero-3-phosphoethanolamine(in) = a 1,2-diacyl-sn-glycero-3-phosphoethanolamine(out). Phospholipid scramblase involved in lipid homeostasis and membrane dynamics processes. Has phospholipid scramblase activity toward cholesterol and phosphatidylserine, as well as phosphatidylethanolamine and phosphatidylcholine. Required for autophagosome formation: participates in early stages of autophagosome biogenesis at the endoplasmic reticulum (ER) membrane by reequilibrating the leaflets of the ER as lipids are extracted by ATG2 (ATG2A or ATG2B) to mediate autophagosome assembly. In addition to autophagy, involved in other processes in which phospholipid scramblase activity is required. Required for normal motor neuron development. Functionally, (Microbial infection) Critical host factor required for infection by human coronaviruses SARS-CoV-2, HCoV-OC43, HCoV-NL63, and HCoV-229E, as well as all flaviviruses tested such as Zika virus and Yellow fever virus. Required post-entry of the virus to facilitate the ER membrane remodeling necessary to form replication organelles. The polypeptide is Transmembrane protein 41B (Homo sapiens (Human)).